Here is a 79-residue protein sequence, read N- to C-terminus: MSDIEARVRKIIAEQLGVEESQVTNEKAFVADLGADSLDSVELVMALEDEFGIEIPDEDAEKITTVQSAIDYANTHQKA.

Residues 2–77 (SDIEARVRKI…SAIDYANTHQ (76 aa)) form the Carrier domain. O-(pantetheine 4'-phosphoryl)serine is present on Ser37.

It belongs to the acyl carrier protein (ACP) family. Post-translationally, 4'-phosphopantetheine is transferred from CoA to a specific serine of apo-ACP by AcpS. This modification is essential for activity because fatty acids are bound in thioester linkage to the sulfhydryl of the prosthetic group.

The protein localises to the cytoplasm. The protein operates within lipid metabolism; fatty acid biosynthesis. Carrier of the growing fatty acid chain in fatty acid biosynthesis. This Verminephrobacter eiseniae (strain EF01-2) protein is Acyl carrier protein.